The primary structure comprises 67 residues: Large ribosomal subunit protein bL35 (67 aa).

The span at 1–16 (MPKMKTKSGAKKRFRV) shows a compositional bias: basic residues. Residues 1 to 24 (MPKMKTKSGAKKRFRVRPGGTVKR) are disordered.

It belongs to the bacterial ribosomal protein bL35 family.

The protein is Large ribosomal subunit protein bL35 of Polaromonas naphthalenivorans (strain CJ2).